Consider the following 401-residue polypeptide: Flagellin D (401 aa).

It belongs to the bacterial flagellin family.

It localises to the secreted. The protein localises to the bacterial flagellum. Flagellin is the subunit protein which polymerizes to form the filaments of bacterial flagella. The polypeptide is Flagellin D (flaD) (Rhizobium meliloti (strain 1021) (Ensifer meliloti)).